The primary structure comprises 160 residues: SsrA-binding protein (160 aa).

The protein belongs to the SmpB family.

Its subcellular location is the cytoplasm. Functionally, required for rescue of stalled ribosomes mediated by trans-translation. Binds to transfer-messenger RNA (tmRNA), required for stable association of tmRNA with ribosomes. tmRNA and SmpB together mimic tRNA shape, replacing the anticodon stem-loop with SmpB. tmRNA is encoded by the ssrA gene; the 2 termini fold to resemble tRNA(Ala) and it encodes a 'tag peptide', a short internal open reading frame. During trans-translation Ala-aminoacylated tmRNA acts like a tRNA, entering the A-site of stalled ribosomes, displacing the stalled mRNA. The ribosome then switches to translate the ORF on the tmRNA; the nascent peptide is terminated with the 'tag peptide' encoded by the tmRNA and targeted for degradation. The ribosome is freed to recommence translation, which seems to be the essential function of trans-translation. This chain is SsrA-binding protein, found in Sodalis glossinidius (strain morsitans).